Reading from the N-terminus, the 740-residue chain is ATP-dependent DNA helicase Hel308 (740 aa).

Residues Q28 and 46–53 (IPTASGKT) contribute to the ATP site. The region spanning 33–204 (RQGLLDGKNL…WMDAALVQSE (172 aa)) is the Helicase ATP-binding domain. A DEAH box motif is present at residues 149 to 152 (DEVH). One can recognise a Helicase C-terminal domain in the interval 236–436 (EVNSLVADTL…EPAMRAHALS (201 aa)). Positions 716-740 (VDHTPPETEEQPQVSGQSTLFSFDG) are disordered. Positions 726 to 740 (QPQVSGQSTLFSFDG) are enriched in polar residues.

This sequence belongs to the helicase family. Hel308 subfamily. Monomer.

It carries out the reaction Couples ATP hydrolysis with the unwinding of duplex DNA by translocating in the 3'-5' direction.. It catalyses the reaction ATP + H2O = ADP + phosphate + H(+). In terms of biological role, DNA-dependent ATPase and 3'-5' DNA helicase that may be involved in repair of stalled replication forks. In Methanocella arvoryzae (strain DSM 22066 / NBRC 105507 / MRE50), this protein is ATP-dependent DNA helicase Hel308.